The sequence spans 253 residues: uncharacterized protein (253 aa).

This is an uncharacterized protein from Mycobacterium bovis (strain ATCC BAA-935 / AF2122/97).